Consider the following 343-residue polypeptide: Fructose-bisphosphate aldolase (343 aa).

D-glyceraldehyde 3-phosphate is bound at residue S53. Catalysis depends on D95, which acts as the Proton donor. Residues H96, D131, E161, and H212 each contribute to the Zn(2+) site. Residue G213 participates in dihydroxyacetone phosphate binding. H252 provides a ligand contact to Zn(2+). Residues 253–255 (GGS) and 274–277 (NIDT) contribute to the dihydroxyacetone phosphate site.

It belongs to the class II fructose-bisphosphate aldolase family. Requires Zn(2+) as cofactor.

The catalysed reaction is beta-D-fructose 1,6-bisphosphate = D-glyceraldehyde 3-phosphate + dihydroxyacetone phosphate. It participates in carbohydrate degradation; glycolysis; D-glyceraldehyde 3-phosphate and glycerone phosphate from D-glucose: step 4/4. Catalyzes the aldol condensation of dihydroxyacetone phosphate (DHAP or glycerone-phosphate) with glyceraldehyde 3-phosphate (G3P) to form fructose 1,6-bisphosphate (FBP) in gluconeogenesis and the reverse reaction in glycolysis. This chain is Fructose-bisphosphate aldolase (fba), found in Streptomyces coelicolor (strain ATCC BAA-471 / A3(2) / M145).